The chain runs to 214 residues: Thiamine import ATP-binding protein ThiQ (214 aa).

Residues 2 to 212 (IKLNTIFDYP…KNGQATEREI (211 aa)) form the ABC transporter domain. 31 to 38 (GESGAGKS) contributes to the ATP binding site.

Belongs to the ABC transporter superfamily. Thiamine importer (TC 3.A.1.19.1) family. In terms of assembly, the complex is composed of two ATP-binding proteins (ThiQ), two transmembrane proteins (ThiP) and a solute-binding protein (ThiB).

It localises to the cell inner membrane. The catalysed reaction is thiamine(out) + ATP + H2O = thiamine(in) + ADP + phosphate + H(+). Part of the ABC transporter complex ThiBPQ involved in thiamine import. Responsible for energy coupling to the transport system. This chain is Thiamine import ATP-binding protein ThiQ, found in Histophilus somni (strain 129Pt) (Haemophilus somnus).